Reading from the N-terminus, the 106-residue chain is NADH dehydrogenase [ubiquinone] 1 beta subcomplex subunit 9 (106 aa).

The protein belongs to the complex I LYR family. As to quaternary structure, complex I is composed of about 45 different subunits.

It localises to the mitochondrion inner membrane. Accessory subunit of the mitochondrial membrane respiratory chain NADH dehydrogenase (Complex I), that is believed to be not involved in catalysis. Complex I functions in the transfer of electrons from NADH to the respiratory chain. The immediate electron acceptor for the enzyme is believed to be ubiquinone. The chain is NADH dehydrogenase [ubiquinone] 1 beta subcomplex subunit 9 (ndufb9) from Dictyostelium discoideum (Social amoeba).